Consider the following 158-residue polypeptide: Transcription elongation factor GreA (158 aa).

Residues 46–66 (AEYEAAKERQGFIEGRISELE) are a coiled coil.

This sequence belongs to the GreA/GreB family.

Necessary for efficient RNA polymerase transcription elongation past template-encoded arresting sites. The arresting sites in DNA have the property of trapping a certain fraction of elongating RNA polymerases that pass through, resulting in locked ternary complexes. Cleavage of the nascent transcript by cleavage factors such as GreA or GreB allows the resumption of elongation from the new 3'terminus. GreA releases sequences of 2 to 3 nucleotides. The sequence is that of Transcription elongation factor GreA from Neisseria meningitidis serogroup B (strain ATCC BAA-335 / MC58).